The primary structure comprises 900 residues: Isoleucine--tRNA ligase (900 aa).

The 'HIGH' region signature appears at 58–68 (PYANGDLHTGH). Position 550 (glutamate 550) interacts with L-isoleucyl-5'-AMP. The 'KMSKS' region signature appears at 591–595 (KMSKS). Residue lysine 594 coordinates ATP. Residues cysteine 871, cysteine 874, cysteine 888, and cysteine 891 each coordinate Zn(2+).

Belongs to the class-I aminoacyl-tRNA synthetase family. IleS type 1 subfamily. Monomer. The cofactor is Zn(2+).

The protein resides in the cytoplasm. It carries out the reaction tRNA(Ile) + L-isoleucine + ATP = L-isoleucyl-tRNA(Ile) + AMP + diphosphate. Functionally, catalyzes the attachment of isoleucine to tRNA(Ile). As IleRS can inadvertently accommodate and process structurally similar amino acids such as valine, to avoid such errors it has two additional distinct tRNA(Ile)-dependent editing activities. One activity is designated as 'pretransfer' editing and involves the hydrolysis of activated Val-AMP. The other activity is designated 'posttransfer' editing and involves deacylation of mischarged Val-tRNA(Ile). The chain is Isoleucine--tRNA ligase from Malacoplasma penetrans (strain HF-2) (Mycoplasma penetrans).